Consider the following 150-residue polypeptide: Ribonuclease H (150 aa).

Residues 1–141 form the RNase H type-1 domain; sequence MKSIEVHTDG…VDVLARNQAT (141 aa). Positions 9, 47, 69, and 133 each coordinate Mg(2+).

It belongs to the RNase H family. As to quaternary structure, monomer. Requires Mg(2+) as cofactor.

It is found in the cytoplasm. It catalyses the reaction Endonucleolytic cleavage to 5'-phosphomonoester.. In terms of biological role, endonuclease that specifically degrades the RNA of RNA-DNA hybrids. The protein is Ribonuclease H of Xanthomonas oryzae pv. oryzae (strain MAFF 311018).